The primary structure comprises 477 residues: MSRFSGALQLTDLDDFITPSQECIKPVTIDKTKSKTGAKITVQEDGYYEESEESGKQKLQKVEITLQDCLACSGCITSAEGVLITQQSQEELLKVLRENQKLKATGDNDLVQTIVFTISMQPILSLAHRYQLSVEETARHLSGYFRNLGADYVLCTKVADDLALIECRQEFVERFRDKEDLTMLSSSCPGWVCYAEKTHGNFILPYIATTRSPQQIMGVLVKHFLAEKFNVPGSRIYHATVMPCYDKKLEASREDFYSEVNGSRDVDCVITSIEVEQMLMEDERSLSQHEPVDLDWPWTDQRPESMIWAHEATMSGGYAEHIFKYAAKELFSEDTDNELKFKQLRNRDFREISLEKDDKTVLKFAIANGFRNIQNLVQKLKRGKGANYHFVEVMACPSGCINGGAQVRPTTGQHVRELTQQLEELYKKLPISQPDNSHTKAIYGDFLDGAHTDKSHDLLHTSYHAVEKLNTALNIKW.

[4Fe-4S] cluster is bound by residues Cys-23, Cys-69, Cys-72, Cys-75, Cys-188, Cys-244, Cys-396, and Cys-400.

It belongs to the NARF family.

Its function is as follows. Component of the cytosolic iron-sulfur (Fe/S) protein assembly machinery. Required for maturation of extramitochondrial Fe/S proteins. The sequence is that of Probable cytosolic Fe-S cluster assembly factor GK14772 from Drosophila willistoni (Fruit fly).